Here is a 267-residue protein sequence, read N- to C-terminus: Nus factor SuhB (267 aa).

Residues glutamate 67, aspartate 84, and leucine 86 each coordinate Mg(2+). Glutamate 67 serves as a coordination point for substrate. Residues 86–89, arginine 183, and aspartate 212 each bind substrate; that span reads LDGT.

Belongs to the inositol monophosphatase superfamily. Homodimer. The rRNA transcription and antitermination complex (rrnTAC) consists of RNA polymerase (RNAP), NusA, NusB, NusE (rpsJ), NusG, SubB, ribosomal protein S4, DNA and precursor rRNA; S4 is more flexible than other subunits. It depends on Mg(2+) as a cofactor.

Its subcellular location is the cytoplasm. It carries out the reaction a myo-inositol phosphate + H2O = myo-inositol + phosphate. In terms of biological role, part of the processive rRNA transcription and antitermination complex (rrnTAC). The complex forms an RNA-chaperone ring around the RNA exit tunnel of RNA polymerase (RNAP). It supports rapid transcription and antitermination of rRNA operons, cotranscriptional rRNA folding, and annealing of distal rRNA regions to allow correct ribosome biogenesis. This subunit may play a central role in organizing the structure. In Vibrio cholerae serotype O1 (strain ATCC 39315 / El Tor Inaba N16961), this protein is Nus factor SuhB.